The sequence spans 704 residues: Elongation factor G (704 aa).

A tr-type G domain is found at 10 to 290; the sequence is NKVRNIGIMA…AVIDYLPSPL (281 aa). GTP-binding positions include 19–26, 83–87, and 137–140; these read AHIDAGKT, DTPGH, and NKMD.

This sequence belongs to the TRAFAC class translation factor GTPase superfamily. Classic translation factor GTPase family. EF-G/EF-2 subfamily.

The protein localises to the cytoplasm. Its function is as follows. Catalyzes the GTP-dependent ribosomal translocation step during translation elongation. During this step, the ribosome changes from the pre-translocational (PRE) to the post-translocational (POST) state as the newly formed A-site-bound peptidyl-tRNA and P-site-bound deacylated tRNA move to the P and E sites, respectively. Catalyzes the coordinated movement of the two tRNA molecules, the mRNA and conformational changes in the ribosome. The chain is Elongation factor G from Clavibacter sepedonicus (Clavibacter michiganensis subsp. sepedonicus).